Here is a 226-residue protein sequence, read N- to C-terminus: N-acetyltransferase family 8 member 3 (226 aa).

A run of 2 helical transmembrane segments spans residues 36–56 (MLLL…LFLA) and 58–78 (GSWL…WFLA). Positions 61-220 (LLVLLSILTL…PMINLKYSLT (160 aa)) constitute an N-acetyltransferase domain.

The protein belongs to the camello family.

The protein localises to the nucleus membrane. Its subcellular location is the cytoplasm. It localises to the perinuclear region. It catalyses the reaction L-lysyl-[protein] + acetyl-CoA = N(6)-acetyl-L-lysyl-[protein] + CoA + H(+). Its function is as follows. Has histone acetyltransferase activity in vitro, with specificity for histone H4. The chain is N-acetyltransferase family 8 member 3 from Mus musculus (Mouse).